Reading from the N-terminus, the 126-residue chain is Large ribosomal subunit protein bL12 (126 aa).

Basic and acidic residues predominate over residues 104-116 (AKKEDAEKAKAQL). Residues 104-126 (AKKEDAEKAKAQLEEAGATVELK) form a disordered region. The span at 117–126 (EEAGATVELK) shows a compositional bias: low complexity.

This sequence belongs to the bacterial ribosomal protein bL12 family. Homodimer. Part of the ribosomal stalk of the 50S ribosomal subunit. Forms a multimeric L10(L12)X complex, where L10 forms an elongated spine to which 2 to 4 L12 dimers bind in a sequential fashion. Binds GTP-bound translation factors.

Functionally, forms part of the ribosomal stalk which helps the ribosome interact with GTP-bound translation factors. Is thus essential for accurate translation. In Bifidobacterium animalis subsp. lactis (strain AD011), this protein is Large ribosomal subunit protein bL12.